A 274-amino-acid polypeptide reads, in one-letter code: Thiamine kinase (274 aa).

The protein belongs to the thiamine kinase family.

The enzyme catalyses thiamine + ATP = thiamine phosphate + ADP + H(+). It functions in the pathway cofactor biosynthesis; thiamine diphosphate biosynthesis; thiamine phosphate from thiamine: step 1/1. In terms of biological role, catalyzes the ATP-dependent phosphorylation of thiamine to thiamine phosphate. Is involved in thiamine salvage. The chain is Thiamine kinase from Shigella sonnei (strain Ss046).